A 497-amino-acid chain; its full sequence is Glycerol kinase (497 aa).

An ADP-binding site is contributed by T12. Positions 12, 13, and 14 each coordinate ATP. T12 contributes to the sn-glycerol 3-phosphate binding site. An ADP-binding site is contributed by R16. Sn-glycerol 3-phosphate contacts are provided by R82, E83, Y134, and D243. Residues R82, E83, Y134, D243, and Q244 each contribute to the glycerol site. Positions 265 and 308 each coordinate ADP. Positions 265, 308, 312, and 411 each coordinate ATP. G411 provides a ligand contact to ADP.

The protein belongs to the FGGY kinase family.

The enzyme catalyses glycerol + ATP = sn-glycerol 3-phosphate + ADP + H(+). The protein operates within polyol metabolism; glycerol degradation via glycerol kinase pathway; sn-glycerol 3-phosphate from glycerol: step 1/1. Its activity is regulated as follows. Inhibited by fructose 1,6-bisphosphate (FBP). In terms of biological role, key enzyme in the regulation of glycerol uptake and metabolism. Catalyzes the phosphorylation of glycerol to yield sn-glycerol 3-phosphate. The protein is Glycerol kinase of Rhizobium meliloti (strain 1021) (Ensifer meliloti).